Reading from the N-terminus, the 509-residue chain is Cytochrome P450 monooxygenase fumoA (509 aa).

A helical transmembrane segment spans residues 5–27 (LANLNFPYLILSACLSAILLSRF). Asn317, Asn369, and Asn378 each carry an N-linked (GlcNAc...) asparagine glycan. Cys456 lines the heme pocket. Asn464 carries an N-linked (GlcNAc...) asparagine glycan.

This sequence belongs to the cytochrome P450 family. Requires heme as cofactor.

It localises to the membrane. The protein operates within secondary metabolite biosynthesis. Cytochrome P450 monooxygenase; part of the gene cluster that mediates the biosynthesis of fumosorinone, a 2-pyridone alkaloid that acts as an inhibitor of protein tyrosine phosphatase 1B which is implicated asa negative regulator of insulin receptor signaling and a potential drug target for the treatment of type II diabetes and other associated metabolic syndromes. The polyketide-amino acid backbone of fumosorinone is first assembled by the PKS-NRPS hybrid fumoS. The PKS modules condense one acetyl-CoA starter unit with 7 malonyl-CoA units, programmed C-methylations occurring after the first 3 and the sixth extensions, and cycles of full reduction occurring after the first 2 extensions. Because fumoS lacks a designated enoyl reductase (ER) domain, the required activity is provided the enoyl reductase fumoC. Upon formation of the polyketide backbone on the thiotemplate, the polyketide is transferred to the NRPS module and linked to tyrosine to produce the acyltetramic acid intermediate called prefumosorinone A. The cytochrome P450 monooxygenase fumoA then probably catalyzes an unprecedented oxidative ring expansion of prefumosorinone A to form prefumosorinone B which contains the 2-pyridone core of fumosorinone. The cytochrome P450 monooxygenase fumoB might hydroxylate the nitrogen of prefumosorinone B, but not the acyltetramic acid prefumosorinone A, to form fumosorinone. The polypeptide is Cytochrome P450 monooxygenase fumoA (Cordyceps fumosorosea (strain ARSEF 2679) (Isaria fumosorosea)).